The sequence spans 472 residues: Succinate-semialdehyde dehydrogenase [NADP(+)] (472 aa).

NADP(+)-binding positions include 134–135 (WN), 158–161 (KHAS), and 210–211 (GS). Glu232 functions as the Proton acceptor in the catalytic mechanism. Leu233 lines the NADP(+) pocket. The active-site Nucleophile is the Cys266. Glu363 serves as a coordination point for NADP(+).

It belongs to the aldehyde dehydrogenase family.

It carries out the reaction succinate semialdehyde + NADP(+) + H2O = succinate + NADPH + 2 H(+). Functionally, catalyzes the NADP(+)-dependent oxidation of succinate semialdehyde to succinate. It is believed to be the main source of succinate semialdehyde dehydrogenase activity in Mycobacterium. In Mycobacterium avium (strain 104), this protein is Succinate-semialdehyde dehydrogenase [NADP(+)] (gabD1).